Here is a 77-residue protein sequence, read N- to C-terminus: uncharacterized protein (77 aa).

This sequence to E.coli YdfK.

This is an uncharacterized protein from Escherichia coli (strain K12).